Consider the following 148-residue polypeptide: Large ribosomal subunit protein uL11 (148 aa).

A disordered region spans residues Glu89–Thr108.

It belongs to the universal ribosomal protein uL11 family. Part of the ribosomal stalk of the 50S ribosomal subunit. Interacts with L10 and the large rRNA to form the base of the stalk. L10 forms an elongated spine to which L12 dimers bind in a sequential fashion forming a multimeric L10(L12)X complex. Post-translationally, one or more lysine residues are methylated.

Functionally, forms part of the ribosomal stalk which helps the ribosome interact with GTP-bound translation factors. This is Large ribosomal subunit protein uL11 from Anaeromyxobacter dehalogenans (strain 2CP-1 / ATCC BAA-258).